A 451-amino-acid chain; its full sequence is SH2 domain-containing protein 7 (451 aa).

Residues 51–142 (WFHGFITRKQ…PFKEMLTAAC (92 aa)) enclose the SH2 domain. Disordered regions lie at residues 180 to 232 (KAAS…SLLE), 256 to 321 (LGTE…SDAM), and 408 to 436 (GTPE…THKP). The segment covering 221–232 (SPLPEKSSSLLE) has biased composition (low complexity). Residues 279-291 (EAQRRLSDGEQNR) show a composition bias toward basic and acidic residues. Residues 306-316 (QGPTESPTSWG) show a composition bias toward polar residues. Positions 426–436 (KSKETGRTHKP) are enriched in basic and acidic residues.

The protein is SH2 domain-containing protein 7 (SH2D7) of Homo sapiens (Human).